The chain runs to 367 residues: DNA replication and repair protein RecF (367 aa).

30-37 (GANGSGKT) contacts ATP.

The protein belongs to the RecF family.

The protein localises to the cytoplasm. The RecF protein is involved in DNA metabolism; it is required for DNA replication and normal SOS inducibility. RecF binds preferentially to single-stranded, linear DNA. It also seems to bind ATP. This chain is DNA replication and repair protein RecF, found in Pseudomonas syringae pv. syringae (strain B728a).